The chain runs to 240 residues: uncharacterized protein (240 aa).

Topologically, residues 1-85 are cytoplasmic; that stretch reads MSGFIKSTLL…LCGCCCWTNT (85 aa). The helical transmembrane segment at 86–106 threads the bilayer; it reads IGWAPLLALLPVIGPLLMYWV. Residues 107 to 131 lie on the Extracellular side of the membrane; it reads HDKLIELADDRYKLPAEIKVKMHGN. A helical transmembrane segment spans residues 132 to 152; that stretch reads IVIDLLISLVPILGSVFAWLH. Residues 153-240 lie on the Cytoplasmic side of the membrane; the sequence is ACSTRNAAIV…TNGRPQRGYR (88 aa). The segment at 181 to 240 is disordered; that stretch reads QKEENEKHSNANTAPPVVGGNKNVNGNRNNSKMYNRPPVTAPPAPAYTRSTNGRPQRGYR. A compositionally biased stretch (low complexity) spans 197 to 210; the sequence is VVGGNKNVNGNRNN.

It is found in the membrane. This is an uncharacterized protein from Saccharomyces cerevisiae (strain ATCC 204508 / S288c) (Baker's yeast).